The chain runs to 473 residues: MGGDAIVLYPYPGLGHLISMVELGKLLLTHHPSFSITILASTAPTTIAATAKLVASSNDQLTNYIKAVSADNPAINFHHLPTISSLPEHIEKLNLPFEYARLQIPNILQVLQTLKSSLKALILDMFCDALFDVTKDLNIPTFYFYTSAGRSLAVLLNIPTFHRTTNSLSDFGDVPISISGMPPIPVSAMPKLLFDRSTNFYKSFLSTSTHMAKSNGIILNTFDLLEERALKALRAGLCLPNQPTPPIFTVGPLISGKSGDNDEHESLKWLNNQPKDSVVFLCFGSMGVFSIKQLEAMALGLEKSGQRFLWVVRNPPIEELPVEEPSLEEILPKGFVERTKDRGLVVRKWAPQVEVLSHDSVGGFVTHCGWNSVLEAVCNGVPMVAWPLYAEQKLGRVFLVEEMKVAVGVKESETGFVSADELEKRVRELMDSESGDEIRGRVSEFSNGGVKAKEEGGSSVASLAKLAQLWKQK.

Belongs to the UDP-glycosyltransferase family.

Its pathway is pigment biosynthesis; anthocyanin biosynthesis. Its function is as follows. Sequentially catalyzes two glycosylation steps at the 5-OH and 3-OH positions of anthocyanidin. Unglycosylated anthocyanidin or anthocyanidin 5-O-glucoside, but not anthocyanidin 3-O-glucoside, can be used as glucosyl acceptor. The sequence is that of Anthocyanidin 5,3-O-glucosyltransferase (RhGT1) from Rosa hybrid cultivar.